Reading from the N-terminus, the 448-residue chain is Phosphoglucosamine mutase (448 aa).

The active-site Phosphoserine intermediate is S102. Residues S102, D241, D243, and D245 each coordinate Mg(2+). Phosphoserine is present on S102.

It belongs to the phosphohexose mutase family. Mg(2+) serves as cofactor. In terms of processing, activated by phosphorylation.

It carries out the reaction alpha-D-glucosamine 1-phosphate = D-glucosamine 6-phosphate. Its function is as follows. Catalyzes the conversion of glucosamine-6-phosphate to glucosamine-1-phosphate. This is Phosphoglucosamine mutase from Ruegeria pomeroyi (strain ATCC 700808 / DSM 15171 / DSS-3) (Silicibacter pomeroyi).